The sequence spans 530 residues: GMP synthase [glutamine-hydrolyzing] (530 aa).

The 202-residue stretch at 4–205 folds into the Glutamine amidotransferase type-1 domain; sequence RILILDYGSQ…VKDICGCEGD (202 aa). The active-site Nucleophile is cysteine 84. Residues histidine 179 and glutamate 181 contribute to the active site. The 193-residue stretch at 206-398 folds into the GMPS ATP-PPase domain; it reads WNMPDYISEA…LGLPPQMVYR (193 aa). 233–239 serves as a coordination point for ATP; it reads SGGVDSS.

Homodimer.

It catalyses the reaction XMP + L-glutamine + ATP + H2O = GMP + L-glutamate + AMP + diphosphate + 2 H(+). It participates in purine metabolism; GMP biosynthesis; GMP from XMP (L-Gln route): step 1/1. Functionally, catalyzes the synthesis of GMP from XMP. In Bordetella bronchiseptica (strain ATCC BAA-588 / NCTC 13252 / RB50) (Alcaligenes bronchisepticus), this protein is GMP synthase [glutamine-hydrolyzing].